The following is a 298-amino-acid chain: Cyclin-dependent kinase 2 homolog (298 aa).

Residues 4–284 form the Protein kinase domain; that stretch reads YHKMEKIGEG…AKEALKHDYF (281 aa). ATP contacts are provided by residues 10 to 18 and lysine 32; that span reads IGEGTYGVV. The residue at position 14 (threonine 14) is a Phosphothreonine. Residue tyrosine 15 is modified to Phosphotyrosine. Aspartate 125 serves as the catalytic Proton acceptor. Residue threonine 158 is modified to Phosphothreonine.

It belongs to the protein kinase superfamily. CMGC Ser/Thr protein kinase family. CDC2/CDKX subfamily. As to quaternary structure, may form a complex composed of at least the catalytic subunit CRK2 and a cyclin. Mg(2+) serves as cofactor.

It localises to the cytoplasm. The catalysed reaction is L-seryl-[protein] + ATP = O-phospho-L-seryl-[protein] + ADP + H(+). It carries out the reaction L-threonyl-[protein] + ATP = O-phospho-L-threonyl-[protein] + ADP + H(+). It catalyses the reaction [DNA-directed RNA polymerase] + ATP = phospho-[DNA-directed RNA polymerase] + ADP + H(+). Phosphorylation at Thr-14 or Tyr-15 inactivates the enzyme, while phosphorylation at Thr-158 activates it. Its function is as follows. Serine/threonine-protein kinase. Involved in the control of the cell cycle. Required for entry into S-phase and mitosis. Probable component of the kinase complex that phosphorylates the repetitive C-terminus of RNA polymerase II. In Theileria parva (East coast fever infection agent), this protein is Cyclin-dependent kinase 2 homolog.